The chain runs to 324 residues: G patch domain-containing protein 4 (324 aa).

Disordered stretches follow at residues 1-30 (MSAS…GKGL) and 123-324 (LSGG…NKSE). The region spanning 11–57 (GMKFAEEQMHKHGWKEGKGLGRRENGICEAIKVKVKCDHAGVGHNSA) is the G-patch domain. A compositionally biased stretch (basic and acidic residues) spans 14–30 (FAEEQMHKHGWKEGKGL). The segment covering 131 to 141 (KEPSSSESSDS) has biased composition (low complexity). A compositionally biased stretch (basic and acidic residues) spans 186 to 215 (SRLEEQEREFLAKYGKKEQKNKERDEKLER). Residues 244–253 (HKKKKKKRKR) are compositionally biased toward basic residues. The segment covering 254–270 (ADSERKEESQENGHEEE) has biased composition (basic and acidic residues). Polar residues predominate over residues 296–309 (PSTQEEQPTESSDF). Residues 312-324 (KPKKKKKKKNKSE) are compositionally biased toward basic residues.

The sequence is that of G patch domain-containing protein 4 (gpatch4) from Xenopus laevis (African clawed frog).